Here is a 500-residue protein sequence, read N- to C-terminus: Lysine--tRNA ligase (500 aa).

Mg(2+)-binding residues include E410 and E417.

The protein belongs to the class-II aminoacyl-tRNA synthetase family. Homodimer. Mg(2+) serves as cofactor.

It localises to the cytoplasm. It carries out the reaction tRNA(Lys) + L-lysine + ATP = L-lysyl-tRNA(Lys) + AMP + diphosphate. This Shewanella denitrificans (strain OS217 / ATCC BAA-1090 / DSM 15013) protein is Lysine--tRNA ligase.